A 208-amino-acid chain; its full sequence is N-(5'-phosphoribosyl)anthranilate isomerase (208 aa).

This sequence belongs to the TrpF family.

The enzyme catalyses N-(5-phospho-beta-D-ribosyl)anthranilate = 1-(2-carboxyphenylamino)-1-deoxy-D-ribulose 5-phosphate. Its pathway is amino-acid biosynthesis; L-tryptophan biosynthesis; L-tryptophan from chorismate: step 3/5. The sequence is that of N-(5'-phosphoribosyl)anthranilate isomerase from Deinococcus radiodurans (strain ATCC 13939 / DSM 20539 / JCM 16871 / CCUG 27074 / LMG 4051 / NBRC 15346 / NCIMB 9279 / VKM B-1422 / R1).